The primary structure comprises 219 residues: Large ribosomal subunit protein uL3 (219 aa).

This sequence belongs to the universal ribosomal protein uL3 family. In terms of assembly, part of the 50S ribosomal subunit. Forms a cluster with proteins L14 and L19.

Its function is as follows. One of the primary rRNA binding proteins, it binds directly near the 3'-end of the 23S rRNA, where it nucleates assembly of the 50S subunit. The sequence is that of Large ribosomal subunit protein uL3 from Salinispora arenicola (strain CNS-205).